The chain runs to 291 residues: Small ribosomal subunit protein uS2 (291 aa).

Positions 238 to 247 are enriched in acidic residues; sequence DEESGDELDE. A disordered region spans residues 238 to 291; it reads DEESGDELDESVSLHEEGREITDYENYTPPEEREYSVNDEGDVFDEDESLYEGR. Residues 249-259 are compositionally biased toward basic and acidic residues; sequence VSLHEEGREIT. Over residues 274–291 the composition is skewed to acidic residues; sequence VNDEGDVFDEDESLYEGR.

This sequence belongs to the universal ribosomal protein uS2 family.

The protein is Small ribosomal subunit protein uS2 (rpsB) of Treponema pallidum (strain Nichols).